The primary structure comprises 1755 residues: Transposon Ty1-ML2 Gag-Pol polyprotein (1755 aa).

Residues M1–S16 are compositionally biased toward low complexity. Disordered stretches follow at residues M1–Q93, P126–P173, and G352–T421. Composition is skewed to polar residues over residues T48–S60 and Q127–F152. Residues T153–T165 show a composition bias toward low complexity. An RNA-binding region spans residues N299–H401. Over residues N402–S418 the composition is skewed to low complexity. Position 416 is a phosphoserine (S416). D461 acts as the For protease activity; shared with dimeric partner in catalysis. The integrase-type zinc finger-like stretch occupies residues N583 to C640. The 176-residue stretch at N660 to P835 folds into the Integrase catalytic domain. Residues D671 and D736 each contribute to the Mg(2+) site. Disordered stretches follow at residues S956 to K1087, R1092 to P1111, and D1130 to A1171. Residues S960 to T969 are compositionally biased toward low complexity. A compositionally biased stretch (polar residues) spans S1005–T1015. Residues E1038 to S1053 show a composition bias toward basic and acidic residues. Composition is skewed to polar residues over residues Y1054–D1082 and P1101–P1111. The Bipartite nuclear localization signal motif lies at K1178–R1212. The Reverse transcriptase Ty1/copia-type domain maps to N1338–Q1476. Mg(2+) is bound by residues D1346, D1427, D1428, D1610, E1652, and D1685. The region spanning D1610 to K1752 is the RNase H Ty1/copia-type domain.

As to quaternary structure, the capsid protein forms a homotrimer, from which the VLPs are assembled. The protease is a homodimer, whose active site consists of two apposed aspartic acid residues. Post-translationally, initially, virus-like particles (VLPs) are composed of the structural unprocessed proteins Gag and Gag-Pol, and also contain the host initiator methionine tRNA (tRNA(i)-Met) which serves as a primer for minus-strand DNA synthesis, and a dimer of genomic Ty RNA. Processing of the polyproteins occurs within the particle and proceeds by an ordered pathway, called maturation. First, the protease (PR) is released by autocatalytic cleavage of the Gag-Pol polyprotein yielding capsid protein p45 and a Pol-p154 precursor protein. This cleavage is a prerequisite for subsequent processing of Pol-p154 at the remaining sites to release the mature structural and catalytic proteins. Maturation takes place prior to the RT reaction and is required to produce transposition-competent VLPs.

The protein resides in the cytoplasm. Its subcellular location is the nucleus. The enzyme catalyses DNA(n) + a 2'-deoxyribonucleoside 5'-triphosphate = DNA(n+1) + diphosphate. The catalysed reaction is Endonucleolytic cleavage to 5'-phosphomonoester.. In terms of biological role, capsid protein (CA) is the structural component of the virus-like particle (VLP), forming the shell that encapsulates the retrotransposons dimeric RNA genome. The particles are assembled from trimer-clustered units and there are holes in the capsid shells that allow for the diffusion of macromolecules. CA also has nucleocapsid-like chaperone activity, promoting primer tRNA(i)-Met annealing to the multipartite primer-binding site (PBS), dimerization of Ty1 RNA and initiation of reverse transcription. Functionally, the aspartyl protease (PR) mediates the proteolytic cleavages of the Gag and Gag-Pol polyproteins after assembly of the VLP. Reverse transcriptase/ribonuclease H (RT) is a multifunctional enzyme that catalyzes the conversion of the retro-elements RNA genome into dsDNA within the VLP. The enzyme displays a DNA polymerase activity that can copy either DNA or RNA templates, and a ribonuclease H (RNase H) activity that cleaves the RNA strand of RNA-DNA heteroduplexes during plus-strand synthesis and hydrolyzes RNA primers. The conversion leads to a linear dsDNA copy of the retrotransposon that includes long terminal repeats (LTRs) at both ends. Its function is as follows. Integrase (IN) targets the VLP to the nucleus, where a subparticle preintegration complex (PIC) containing at least integrase and the newly synthesized dsDNA copy of the retrotransposon must transit the nuclear membrane. Once in the nucleus, integrase performs the integration of the dsDNA into the host genome. This chain is Transposon Ty1-ML2 Gag-Pol polyprotein (TY1B-ML2), found in Saccharomyces cerevisiae (strain ATCC 204508 / S288c) (Baker's yeast).